Consider the following 555-residue polypeptide: MQSVVCLIGAFIAAAVFRPGSCVGTVIGLYGETIVVPCNDGTKKPDGLIFTKWKYVKDDGSPGDLLVKQAQKDEATVSATDGYKSRVSIAANSSLLIARGSLADQRVFTCMVVSFTNLEEYSVEVKVHKKPSAPVIKNNAKELENGKLTQLGECVVENANPPADLIWKKNNQTLVDDGKTIIITSTITKDKITGLSSTSSRLQYTARKEDVESQFTCTAKHVMGPDQVSEPESFPIHYPTEKVSLQVVSQSPIREGEDVTLKCQADGNPPPTSFNFNIKGKKVTVTDKDVYTLTGVTRADSGIYKCSLLDNDVMESTQFVTVSFLDVSLTPTGKVLKNVGENLIVSLDKNASSEAKVTWTKDNRKLDKLPDFSKLTYSDAGLYVCDVSIEGIKRSLSFELTVEGIPKITSLTKHRSSDGKHKVLTCEAEGSPKPDVQWSVNGTNDEVSYNNGKATYKLTVVPSKNLTVSCLVTNKLGEDTKEISVFSQKNEDGTEQAKVIVGIVVGLLVAAALVGLIYWIYIKKTRQGSWKTGEKEAGTSEESKKLEENNHKPDV.

An N-terminal signal peptide occupies residues 1–22; it reads MQSVVCLIGAFIAAAVFRPGSC. Ig-like V-type domains lie at 23–127 and 131–229; these read VGTV…EVKV and PSAP…DQVS. At 23–499 the chain is on the extracellular side; it reads VGTVIGLYGE…NEDGTEQAKV (477 aa). 3 disulfide bridges follow: cysteine 38-cysteine 110, cysteine 154-cysteine 217, and cysteine 263-cysteine 306. N-linked (GlcNAc...) asparagine glycans are attached at residues asparagine 92 and asparagine 171. Ig-like C2-type domains follow at residues 239–323, 319–397, and 406–484; these read PTEK…VTVS, FVTV…RSLS, and PKIT…KEIS. 3 N-linked (GlcNAc...) asparagine glycosylation sites follow: asparagine 350, asparagine 441, and asparagine 465. A disulfide bridge links cysteine 426 with cysteine 470. Residues 500–520 form a helical membrane-spanning segment; it reads IVGIVVGLLVAAALVGLIYWI. Over 521 to 555 the chain is Cytoplasmic; sequence YIKKTRQGSWKTGEKEAGTSEESKKLEENNHKPDV. The disordered stretch occupies residues 529–555; sequence SWKTGEKEAGTSEESKKLEENNHKPDV. Positions 532–555 are enriched in basic and acidic residues; sequence TGEKEAGTSEESKKLEENNHKPDV.

As to quaternary structure, homodimer. Interacts (via extracellular domain) with CD6 (via extracellular domain). Homodimerization and interaction with CD6 involve the same region and cannot occur simultaneously. The affinity for CD6 is much higher than the affinity for self-association. As to expression, present on all retinal ganglion cells (RGCS) and their axons (in embryo). Absent from mature axons along most of their length, but is present on new and growing axons derived from the RGCS at the retinal margin. Remains on adult RGCS only at cell-cell contact sites and is continuously found in the retinal axon terminal arbor layers of the adult tectum.

The protein localises to the cell membrane. Its subcellular location is the cell projection. It is found in the axon. The protein resides in the dendrite. Functionally, cell adhesion molecule that mediates both heterotypic cell-cell contacts via its interaction with CD6, as well as homotypic cell-cell contacts. Promotes T-cell activation and proliferation via its interactions with CD6. Contributes to the formation and maturation of the immunological synapse via its interactions with CD6. Mediates homotypic interactions with cells that express ALCAM. Mediates attachment of dendritic cells onto endothelial cells via homotypic interaction. Inhibits endothelial cell migration and promotes endothelial tube formation via homotypic interactions. Required for normal organization of the lymph vessel network. Required for normal hematopoietic stem cell engraftment in the bone marrow. Plays a role in hematopoiesis; required for normal numbers of hematopoietic stem cells in bone marrow. Promotes in vitro osteoblast proliferation and differentiation. Promotes neurite extension, axon growth and axon guidance; axons grow preferentially on surfaces that contain ALCAM. Mediates outgrowth and pathfinding for retinal ganglion cell axons. This Carassius auratus (Goldfish) protein is CD166 antigen homolog (alcam).